The chain runs to 800 residues: Elongation factor G, mitochondrial (800 aa).

The N-terminal 59 residues, 1–59, are a transit peptide targeting the mitochondrion; that stretch reads MRVIRAVATLHAGRAAAVRQGVRSVSLGACRAAVETPSLRSAGSQFESRRLFSRSSYLR. A tr-type G domain is found at 99 to 385; sequence ARVRNIGIAA…AVCDYLPNPN (287 aa). Residues 108–115, 183–187, and 237–240 each bind GTP; these read AHIDSGKT, DTPGH, and NKMD.

Belongs to the TRAFAC class translation factor GTPase superfamily. Classic translation factor GTPase family. EF-G/EF-2 subfamily.

Its subcellular location is the mitochondrion. It functions in the pathway protein biosynthesis; polypeptide chain elongation. Functionally, mitochondrial GTPase that catalyzes the GTP-dependent ribosomal translocation step during translation elongation. During this step, the ribosome changes from the pre-translocational (PRE) to the post-translocational (POST) state as the newly formed A-site-bound peptidyl-tRNA and P-site-bound deacylated tRNA move to the P and E sites, respectively. Catalyzes the coordinated movement of the two tRNA molecules, the mRNA and conformational changes in the ribosome. The protein is Elongation factor G, mitochondrial (mef1) of Neurospora crassa (strain ATCC 24698 / 74-OR23-1A / CBS 708.71 / DSM 1257 / FGSC 987).